The chain runs to 438 residues: DEAD-box ATP-dependent RNA helicase 58, chloroplastic (438 aa).

Residues Met-1–Cys-44 constitute a chloroplast transit peptide. Residues Arg-41–Glu-69 carry the Q motif motif. The Helicase ATP-binding domain occupies Leu-72–Thr-245. Residue Ala-85 to Thr-92 participates in ATP binding. The short motif at Asp-190–Asp-193 is the DEAD box element. Positions Arg-274–Phe-436 constitute a Helicase C-terminal domain.

This sequence belongs to the DEAD box helicase family.

It is found in the plastid. The protein resides in the chloroplast. It carries out the reaction ATP + H2O = ADP + phosphate + H(+). The polypeptide is DEAD-box ATP-dependent RNA helicase 58, chloroplastic (Oryza sativa subsp. japonica (Rice)).